Reading from the N-terminus, the 51-residue chain is Insulin-1 (51 aa).

3 disulfides stabilise this stretch: Cys8/Cys37, Cys20/Cys50, and Cys36/Cys41.

This sequence belongs to the insulin family. In terms of assembly, heterodimer of a B chain and an A chain linked by two disulfide bonds.

Its subcellular location is the secreted. In terms of biological role, insulin decreases blood glucose concentration. It increases cell permeability to monosaccharides, amino acids and fatty acids. It accelerates glycolysis, the pentose phosphate cycle, and glycogen synthesis in liver. This Batrachoididae sp. (Toadfish) protein is Insulin-1 (ins1).